Reading from the N-terminus, the 170-residue chain is Phosphopantetheine adenylyltransferase (170 aa).

Residue threonine 14 participates in substrate binding. ATP contacts are provided by residues 14 to 15 (TF) and histidine 22. Positions 46, 78, and 92 each coordinate substrate. ATP is bound by residues 93–95 (GLR), glutamate 103, and 128–134 (WLYISST).

The protein belongs to the bacterial CoaD family. As to quaternary structure, homohexamer. The cofactor is Mg(2+).

It is found in the cytoplasm. The catalysed reaction is (R)-4'-phosphopantetheine + ATP + H(+) = 3'-dephospho-CoA + diphosphate. Its pathway is cofactor biosynthesis; coenzyme A biosynthesis; CoA from (R)-pantothenate: step 4/5. Reversibly transfers an adenylyl group from ATP to 4'-phosphopantetheine, yielding dephospho-CoA (dPCoA) and pyrophosphate. The sequence is that of Phosphopantetheine adenylyltransferase from Oleidesulfovibrio alaskensis (strain ATCC BAA-1058 / DSM 17464 / G20) (Desulfovibrio alaskensis).